Reading from the N-terminus, the 363-residue chain is Uroporphyrinogen decarboxylase (363 aa).

Substrate is bound by residues 36 to 40 (RQAGR), D85, Y160, S215, and H339.

Belongs to the uroporphyrinogen decarboxylase family. As to quaternary structure, homodimer.

The protein localises to the cytoplasm. The enzyme catalyses uroporphyrinogen III + 4 H(+) = coproporphyrinogen III + 4 CO2. It participates in porphyrin-containing compound metabolism; protoporphyrin-IX biosynthesis; coproporphyrinogen-III from 5-aminolevulinate: step 4/4. Its function is as follows. Catalyzes the decarboxylation of four acetate groups of uroporphyrinogen-III to yield coproporphyrinogen-III. The sequence is that of Uroporphyrinogen decarboxylase from Saccharopolyspora erythraea (strain ATCC 11635 / DSM 40517 / JCM 4748 / NBRC 13426 / NCIMB 8594 / NRRL 2338).